The chain runs to 262 residues: 3-methyl-2-oxobutanoate hydroxymethyltransferase (262 aa).

Mg(2+) is bound by residues Asp42 and Asp81. 3-methyl-2-oxobutanoate contacts are provided by residues 42 to 43, Asp81, and Lys110; that span reads DS. Residue Glu112 coordinates Mg(2+). Glu180 serves as the catalytic Proton acceptor.

It belongs to the PanB family. Homodecamer; pentamer of dimers. Mg(2+) serves as cofactor.

The protein resides in the cytoplasm. The enzyme catalyses 3-methyl-2-oxobutanoate + (6R)-5,10-methylene-5,6,7,8-tetrahydrofolate + H2O = 2-dehydropantoate + (6S)-5,6,7,8-tetrahydrofolate. Its pathway is cofactor biosynthesis; (R)-pantothenate biosynthesis; (R)-pantoate from 3-methyl-2-oxobutanoate: step 1/2. In terms of biological role, catalyzes the reversible reaction in which hydroxymethyl group from 5,10-methylenetetrahydrofolate is transferred onto alpha-ketoisovalerate to form ketopantoate. This chain is 3-methyl-2-oxobutanoate hydroxymethyltransferase, found in Legionella pneumophila (strain Paris).